Here is a 168-residue protein sequence, read N- to C-terminus: Lipoprotein signal peptidase (168 aa).

4 consecutive transmembrane segments (helical) span residues 15–35 (WLWL…VVMD), 47–67 (VLPF…SFLS), 75–95 (WLFT…MSKL), and 107–127 (ALII…GFVV). Residues Asp-128 and Asp-146 contribute to the active site. The helical transmembrane segment at 141-161 (AFNLADTTICIGAAMIILDGF) threads the bilayer.

The protein belongs to the peptidase A8 family.

It is found in the cell inner membrane. It catalyses the reaction Release of signal peptides from bacterial membrane prolipoproteins. Hydrolyzes -Xaa-Yaa-Zaa-|-(S,diacylglyceryl)Cys-, in which Xaa is hydrophobic (preferably Leu), and Yaa (Ala or Ser) and Zaa (Gly or Ala) have small, neutral side chains.. The protein operates within protein modification; lipoprotein biosynthesis (signal peptide cleavage). Functionally, this protein specifically catalyzes the removal of signal peptides from prolipoproteins. The protein is Lipoprotein signal peptidase of Vibrio campbellii (strain ATCC BAA-1116).